Reading from the N-terminus, the 139-residue chain is UPF0225 protein Bpro_4182 (139 aa).

It belongs to the UPF0225 family.

This Polaromonas sp. (strain JS666 / ATCC BAA-500) protein is UPF0225 protein Bpro_4182.